We begin with the raw amino-acid sequence, 100 residues long: Putative protein adenylyltransferase MJ0604 (100 aa).

A GSX(10)DXD motif motif is present at residues 29-43 (GSYARGDYTEESDID). Mg(2+) contacts are provided by D41 and D43.

The protein belongs to the MntA antitoxin family. The cofactor is Mg(2+).

The enzyme catalyses L-tyrosyl-[protein] + ATP = O-(5'-adenylyl)-L-tyrosyl-[protein] + diphosphate. It carries out the reaction O-(5'-adenylyl)-L-tyrosyl-[protein] + ATP = O-[5'-(adenylyl-(5'-&gt;3')-adenylyl)]-L-tyrosyl-[protein] + diphosphate. Functionally, putative antitoxin component of a putative type VII toxin-antitoxin (TA) system. Its cognate toxin might be MJ0605, which it might AMPylate. The protein is Putative protein adenylyltransferase MJ0604 of Methanocaldococcus jannaschii (strain ATCC 43067 / DSM 2661 / JAL-1 / JCM 10045 / NBRC 100440) (Methanococcus jannaschii).